The chain runs to 363 residues: Neurogenic differentiation factor 2 (363 aa).

Residues 1 to 116 (MLTRLFKEPS…VRRQKANARE (116 aa)) form a disordered region. The segment covering 28–44 (EDSKTKDEEQERCRLGD) has biased composition (basic and acidic residues). Residues 64-83 (AGEEDYDEDVDEDDCGEEGD) show a composition bias toward acidic residues. Basic residues predominate over residues 87-98 (PKKRGPKKRKMT). The Nuclear localization signal motif lies at 93-99 (KKRKMTP). The region spanning 107–159 (VRRQKANARERTRMHDLNSALDNLLKVVPCYSKTQKLSKIETLRLAKNYIWAL) is the bHLH domain.

As to quaternary structure, efficient DNA binding requires dimerization with another bHLH protein. In adult, expressed strongly in brain and more weakly in skin, muscle, eye and ovary.

The protein localises to the nucleus. Functionally, transcriptional regulator. Appears to mediate neuronal differentiation. The sequence is that of Neurogenic differentiation factor 2 from Danio rerio (Zebrafish).